Consider the following 266-residue polypeptide: MAKQMFRALVALLLTLPVWLYAAPRVITLSPANTELAFAAGITPVGVSSYSDYPPEAQKIEQVSTWQGMNLERIVALKPDLVVAWRGGNAERQVNQLTSLGIKVMWVDAVSIEQIADALRQLAVWSPQPEKAQQAAQTLLNEYAALKVEYAGKAKKRVFLQFGMNPLFTSGKGSIQHQVLTTCGGENIFADSRVPWPQVSREQVLARHPQAIIVAGKAGEILKIEQYWGNLLKIPVIPLNSDWFERASPRIILAAKQLCNALSQVN.

A signal peptide spans 1–22 (MAKQMFRALVALLLTLPVWLYA). Residues 25–266 (RVITLSPANT…QLCNALSQVN (242 aa)) enclose the Fe/B12 periplasmic-binding domain. Residues tyrosine 50 and 242 to 246 (DWFER) each bind cyanocob(III)alamin. Residues cysteine 183 and cysteine 259 are joined by a disulfide bond.

Belongs to the BtuF family. In terms of assembly, the complex is composed of two ATP-binding proteins (BtuD), two transmembrane proteins (BtuC) and a solute-binding protein (BtuF).

The protein resides in the periplasm. In terms of biological role, part of the ABC transporter complex BtuCDF involved in vitamin B12 import. Binds vitamin B12 and delivers it to the periplasmic surface of BtuC. This is Vitamin B12-binding protein from Salmonella paratyphi A (strain ATCC 9150 / SARB42).